We begin with the raw amino-acid sequence, 219 residues long: Cyclin-U4-3 (219 aa).

It belongs to the cyclin family. Cyclin U/P subfamily. In terms of assembly, interacts with CDKA-1. As to expression, expressed at low levels in roots, stems and flowers. Expressed in the shoot apex, leaf primordia and young leaves.

The polypeptide is Cyclin-U4-3 (CYCU4-3) (Arabidopsis thaliana (Mouse-ear cress)).